The following is a 172-amino-acid chain: Gastrula zinc finger protein XlCGF51.1A (172 aa).

C2H2-type zinc fingers lie at residues 6–28 (FSCSDCGARFTYRSLLRRHNKIH), 34–56 (LICSECGKPFTSESALTAHQRSH), 62–84 (FSCTDCEKCFAQRMHLIEHQRTH), 90–112 (FSCTVCGEMFTYRAQFSKHMLKH), 122–144 (LDCSHCGKHFTSRSDLTVHRKSH), and 150–172 (LQCSDCGKCFKYQSQLASHQRVH).

This sequence belongs to the krueppel C2H2-type zinc-finger protein family.

The protein resides in the nucleus. Its function is as follows. May be involved in transcriptional regulation. The sequence is that of Gastrula zinc finger protein XlCGF51.1A from Xenopus laevis (African clawed frog).